We begin with the raw amino-acid sequence, 458 residues long: tRNA modification GTPase MnmE (458 aa).

(6S)-5-formyl-5,6,7,8-tetrahydrofolate is bound by residues R32, E89, and K128. A TrmE-type G domain is found at 224–381; the sequence is GVRVVLAGRP…LCQRLKECAG (158 aa). Position 234 (N234) interacts with K(+). GTP is bound by residues 234-239, 253-259, and 278-281; these read NVGKSS, TDVPGTT, and DTAG. S238 serves as a coordination point for Mg(2+). The K(+) site is built by T253, V255, and T258. Mg(2+) is bound at residue T259. Residue K458 coordinates (6S)-5-formyl-5,6,7,8-tetrahydrofolate.

This sequence belongs to the TRAFAC class TrmE-Era-EngA-EngB-Septin-like GTPase superfamily. TrmE GTPase family. In terms of assembly, homodimer. Heterotetramer of two MnmE and two MnmG subunits. K(+) serves as cofactor.

The protein localises to the cytoplasm. In terms of biological role, exhibits a very high intrinsic GTPase hydrolysis rate. Involved in the addition of a carboxymethylaminomethyl (cmnm) group at the wobble position (U34) of certain tRNAs, forming tRNA-cmnm(5)s(2)U34. The protein is tRNA modification GTPase MnmE of Nitrosococcus oceani (strain ATCC 19707 / BCRC 17464 / JCM 30415 / NCIMB 11848 / C-107).